Here is a 340-residue protein sequence, read N- to C-terminus: Arginase 1, mitochondrial (340 aa).

A mitochondrion-targeting transit peptide spans 1 to 24 (MGGVAAGTRWIHHVRRLSAAKVST). His159, Asp183, His185, and Asp187 together coordinate Mn(2+). Substrate-binding positions include 185-189 (HPDIY) and 193-195 (EGN). 2 residues coordinate Mn(2+): Asp268 and Asp270. Glu311 contributes to the substrate binding site.

Belongs to the arginase family. Mn(2+) serves as cofactor.

The protein resides in the mitochondrion. The enzyme catalyses L-arginine + H2O = urea + L-ornithine. Its pathway is nitrogen metabolism; urea cycle; L-ornithine and urea from L-arginine: step 1/1. Catalyzes the hydrolysis of L-arginine to urea and L-ornithine. The latter can be utilized in the urea cycle or as a precursor for the synthesis of both polyamines and proline. The chain is Arginase 1, mitochondrial from Oryza sativa subsp. indica (Rice).